Here is a 96-residue protein sequence, read N- to C-terminus: Putative pterin-4-alpha-carbinolamine dehydratase (96 aa).

This sequence belongs to the pterin-4-alpha-carbinolamine dehydratase family.

The enzyme catalyses (4aS,6R)-4a-hydroxy-L-erythro-5,6,7,8-tetrahydrobiopterin = (6R)-L-erythro-6,7-dihydrobiopterin + H2O. This chain is Putative pterin-4-alpha-carbinolamine dehydratase, found in Herpetosiphon aurantiacus (strain ATCC 23779 / DSM 785 / 114-95).